Here is a 349-residue protein sequence, read N- to C-terminus: Single-stranded TG1-3 DNA-binding protein (349 aa).

The 83-residue stretch at 45–127 folds into the RRM 1 domain; sequence FRVFVGRLST…REIVVQKARP (83 aa). 2 disordered regions span residues 121 to 208 and 298 to 349; these read VVQK…PNSI and EDKQ…AITA. At Ser152 the chain carries Phosphoserine. Polar residues predominate over residues 168–179; the sequence is ANTATAPSSNEA. Residues 181–191 show a composition bias toward basic and acidic residues; sequence GVDKKQNEIKG. One can recognise an RRM 2 domain in the interval 206–296; it reads NSIYVSGLSV…LTLVVKSAVF (91 aa). Basic and acidic residues-rich tracts occupy residues 298–310 and 327–340; these read EDKQ…KNEN and TEPK…EEKS.

The protein resides in the cytoplasm. The protein localises to the nucleus. It is found in the chromosome. It localises to the telomere. Its function is as follows. Binds single-stranded telomeric sequences of the type (TG[1-3])n in vitro. Has a role in meiosis. This chain is Single-stranded TG1-3 DNA-binding protein (tcg1), found in Schizosaccharomyces pombe (strain 972 / ATCC 24843) (Fission yeast).